The following is an 80-amino-acid chain: Protein FAM229B (80 aa).

Residues 1–44 (MPFRFGTQPRRFPVEGGDSSIGLEPGLSSSATCNGKEMSPTRQL) are disordered.

Belongs to the FAM229 family.

In Bos taurus (Bovine), this protein is Protein FAM229B (FAM229B).